A 253-amino-acid chain; its full sequence is DNA repair protein RecO (253 aa).

It belongs to the RecO family.

Involved in DNA repair and RecF pathway recombination. The chain is DNA repair protein RecO from Streptococcus agalactiae serotype Ia (strain ATCC 27591 / A909 / CDC SS700).